Consider the following 150-residue polypeptide: MAGPVKDREAFQRLSFLYQAAHCVLSQNPENQALARFYCHTEKTIAKRLVLRQDPSVKRTLCRSCSSLLIPGLTCTQRQRRRKGQRWTVQTCLTCQRSQRFLNDPKHLLWGDRPEAQLENQADINPSEPLPNIADLPKENIQTQALNTSE.

N-acetylalanine is present on Ala2. Residues Cys62, Cys65, Cys92, and Cys95 each coordinate Zn(2+). The segment at 121-150 (QADINPSEPLPNIADLPKENIQTQALNTSE) is disordered. The segment covering 140–150 (NIQTQALNTSE) has biased composition (polar residues).

The protein belongs to the eukaryotic/archaeal RNase P protein component 4 family. In terms of assembly, RNase P consists of a catalytic RNA moiety and about 10 protein subunits; POP1, POP4, POP5, POP7, RPP14, RPP21, RPP25, RPP30, RPP38 and RPP40. Within the RNase P complex, POP1, POP7 and RPP25 form the 'finger' subcomplex, POP5, RPP14, RPP40 and homodimeric RPP30 form the 'palm' subcomplex, and RPP21, POP4 and RPP38 form the 'wrist' subcomplex. All subunits of the RNase P complex interact with the catalytic RNA.

It localises to the nucleus. The protein resides in the nucleolus. Its function is as follows. Component of ribonuclease P, a ribonucleoprotein complex that generates mature tRNA molecules by cleaving their 5'-ends. The sequence is that of Ribonuclease P protein subunit p21 (Rpp21) from Mus musculus (Mouse).